We begin with the raw amino-acid sequence, 365 residues long: NAC domain-containing protein 43 (365 aa).

Residues 16 to 180 (VPPGFRFHPT…GWVVCRIFKK (165 aa)) enclose the NAC domain. Residues 116–186 (IGMRKTLVFY…IFKKKNLHKT (71 aa)) mediate DNA binding.

Expressed in various aboveground tissues undergoing thickening of the lignified secondary wall such as anthers, filaments of stamens, the base of carpels, styles, the boundaries between siliques and pedicels, the midrib of leaf veins, and inflorescence stems, specifically in interfascicular fibers (sclerenchyma), cells differentiating into vascular vessels, and xylary fibers (secondary xylem).

The protein localises to the nucleus. Its function is as follows. Transcription activator of genes involved in biosynthesis of secondary walls. Together with NST2 and NST3, required for the secondary cell wall thickening of sclerenchymatous fibers, secondary xylem (tracheary elements), and of the anther endocethium, which is necessary for anther dehiscence. May also regulate the secondary cell wall lignification of other tissues. The chain is NAC domain-containing protein 43 (NAC043) from Arabidopsis thaliana (Mouse-ear cress).